Reading from the N-terminus, the 220-residue chain is Deoxyribose-phosphate aldolase 2 (220 aa).

The Proton donor/acceptor role is filled by Asp-89. Catalysis depends on Lys-151, which acts as the Schiff-base intermediate with acetaldehyde. Lys-180 acts as the Proton donor/acceptor in catalysis.

It belongs to the DeoC/FbaB aldolase family. DeoC type 1 subfamily.

Its subcellular location is the cytoplasm. The enzyme catalyses 2-deoxy-D-ribose 5-phosphate = D-glyceraldehyde 3-phosphate + acetaldehyde. It functions in the pathway carbohydrate degradation; 2-deoxy-D-ribose 1-phosphate degradation; D-glyceraldehyde 3-phosphate and acetaldehyde from 2-deoxy-alpha-D-ribose 1-phosphate: step 2/2. Catalyzes a reversible aldol reaction between acetaldehyde and D-glyceraldehyde 3-phosphate to generate 2-deoxy-D-ribose 5-phosphate. The chain is Deoxyribose-phosphate aldolase 2 from Staphylococcus aureus (strain N315).